The sequence spans 211 residues: Soluble inorganic pyrophosphatase PPA1 (211 aa).

Lys61 and Arg75 together coordinate substrate. The active-site Proton donor is Tyr83. Residue Tyr87 coordinates substrate. Positions 97, 102, and 134 each coordinate Mg(2+). Tyr171 contacts substrate.

Belongs to the PPase family. It depends on Mg(2+) as a cofactor.

The protein localises to the cytoplasm. It catalyses the reaction diphosphate + H2O = 2 phosphate + H(+). Its activity is regulated as follows. Strongly inhibited by Ca(2+). Catalyzes the irreversible hydrolysis of pyrophosphate (PPi) to phosphate. The polypeptide is Soluble inorganic pyrophosphatase PPA1 (Solanum tuberosum (Potato)).